The chain runs to 1770 residues: U3 small nucleolar RNA-associated protein 10 (1770 aa).

Transmembrane regions (helical) follow at residues 499–519 (ILGL…FLSS) and 528–548 (LTFL…RLLA). One copy of the HEAT repeat lies at 1730 to 1768 (MVPIIAELLEDDNEEVESEVRGGLVRVMENVLGEPFDRY).

Belongs to the HEATR1/UTP10 family. As to quaternary structure, component of the ribosomal small subunit (SSU) processome.

It localises to the nucleus. The protein resides in the nucleolus. It is found in the membrane. Involved in nucleolar processing of pre-18S ribosomal RNA. Involved in ribosome biosynthesis. In Candida glabrata (strain ATCC 2001 / BCRC 20586 / JCM 3761 / NBRC 0622 / NRRL Y-65 / CBS 138) (Yeast), this protein is U3 small nucleolar RNA-associated protein 10.